The primary structure comprises 363 residues: MANYIHVPPGSPEVPKLDVTVQDQEEQRCRDGALSLLRHLRPHWDPREVTLQLFTDGITNKLIACYVGDTMEDVVLVRIYGNKTELLVDRDEEVKSFRVLQAHGCAPQLYCTFNNGLCYEFIQGEALDPQHVCNPAIFRLIARQLAKIHAIHAHNGWIPKSNLWLKMGKYFSLIPTGFADENINKRFLSEIPSPQLLQEEMTWMKELLSSLGSPVVLCHNDLLCKNIIYNEKQGDVQFIDYEYSGYNYLAYDIGNHFNEFAGVSDVDYSLYPDRELQGQWLRSYLEAYKEYKGFGSDVTEKEVETLFIQVNQFALASHFFWGLWALIQAKYSTIEFDFLGYAVVRFNQYFKMKPEVTALKMPE.

The protein belongs to the choline/ethanolamine kinase family.

It is found in the cytoplasm. The catalysed reaction is ethanolamine + ATP = phosphoethanolamine + ADP + H(+). Its pathway is phospholipid metabolism; phosphatidylethanolamine biosynthesis; phosphatidylethanolamine from ethanolamine: step 1/3. Functionally, highly specific for ethanolamine phosphorylation. May be a rate-controlling step in phosphatidylethanolamine biosynthesis. The sequence is that of Ethanolamine kinase 1 (Etnk1) from Mus musculus (Mouse).